The primary structure comprises 354 residues: Anthranilate phosphoribosyltransferase (354 aa).

5-phospho-alpha-D-ribose 1-diphosphate contacts are provided by residues Gly94, 97 to 98 (GD), Thr102, 104 to 107 (NIST), 122 to 130 (KHGNRAASS), and Ser134. Position 94 (Gly94) interacts with anthranilate. Ser106 provides a ligand contact to Mg(2+). Asn125 contacts anthranilate. Arg180 contacts anthranilate. Positions 238 and 239 each coordinate Mg(2+).

It belongs to the anthranilate phosphoribosyltransferase family. Homodimer. Mg(2+) serves as cofactor.

It catalyses the reaction N-(5-phospho-beta-D-ribosyl)anthranilate + diphosphate = 5-phospho-alpha-D-ribose 1-diphosphate + anthranilate. It functions in the pathway amino-acid biosynthesis; L-tryptophan biosynthesis; L-tryptophan from chorismate: step 2/5. Functionally, catalyzes the transfer of the phosphoribosyl group of 5-phosphorylribose-1-pyrophosphate (PRPP) to anthranilate to yield N-(5'-phosphoribosyl)-anthranilate (PRA). In Streptomyces griseus subsp. griseus (strain JCM 4626 / CBS 651.72 / NBRC 13350 / KCC S-0626 / ISP 5235), this protein is Anthranilate phosphoribosyltransferase.